The primary structure comprises 60 residues: Mastoparan-VB2 (60 aa).

Positions 1-27 (MKNTILLLFTAFIFLMGFFGMSADALA) are cleaved as a signal peptide. 4 AXPX repeats span residues 27-30 (ADPK), 31-34 (ADPL), 35-38 (AGPF), and 41-44 (ADPD). Positions 28-45 (DPKADPLAGPFPDADPDP) are excised as a propeptide. A Leucine amide modification is found at L59.

The protein belongs to the MCD family. Mastoparan subfamily. As to expression, expressed by the venom gland.

Its subcellular location is the secreted. It localises to the target cell membrane. Functionally, antimicrobial peptide. Shows activity against both Gram-positive and -negative bacteria, as well against fungi. Also promotes moderate mast cell degranulation. Does not show hemolytic activity on rabbit and human erythrocytes. Its mast cell degranulation activity may be related to the activation of G-protein coupled receptors in mast cells as well as interaction with other proteins located in cell endosomal membranes in the mast cells. This Vespa bicolor (Black shield wasp) protein is Mastoparan-VB2.